A 332-amino-acid polypeptide reads, in one-letter code: Delta-aminolevulinic acid dehydratase (332 aa).

Lys199 serves as the catalytic Schiff-base intermediate with substrate. 5-aminolevulinate-binding residues include Arg209 and Lys221. Mg(2+) is bound at residue Glu237. Lys252 acts as the Schiff-base intermediate with substrate in catalysis. 5-aminolevulinate contacts are provided by Ser278 and Tyr317.

This sequence belongs to the ALAD family. In terms of assembly, homooctamer.

The enzyme catalyses 2 5-aminolevulinate = porphobilinogen + 2 H2O + H(+). It functions in the pathway porphyrin-containing compound metabolism; protoporphyrin-IX biosynthesis; coproporphyrinogen-III from 5-aminolevulinate: step 1/4. Functionally, catalyzes an early step in the biosynthesis of tetrapyrroles. Binds two molecules of 5-aminolevulinate per subunit, each at a distinct site, and catalyzes their condensation to form porphobilinogen. This Chlamydia pneumoniae (Chlamydophila pneumoniae) protein is Delta-aminolevulinic acid dehydratase (hemB).